The sequence spans 300 residues: Protein XRI1 (300 aa).

Interacts (via C-terminal domain) with MIP1.

It is found in the nucleus. Functionally, required for mitotic division of the generative cell nucleus and the development of mature tricellular pollen grains, and for male and female meiosis. The polypeptide is Protein XRI1 (XRI1) (Arabidopsis thaliana (Mouse-ear cress)).